Consider the following 252-residue polypeptide: Type III pantothenate kinase (252 aa).

Position 6-13 (6-13) interacts with ATP; the sequence is DIGNTNTV. Residue 105-108 participates in substrate binding; the sequence is GADR. Asp107 (proton acceptor) is an active-site residue. Asp127 is a K(+) binding site. ATP is bound at residue Thr130. Thr182 serves as a coordination point for substrate.

Belongs to the type III pantothenate kinase family. As to quaternary structure, homodimer. It depends on NH4(+) as a cofactor. K(+) serves as cofactor.

Its subcellular location is the cytoplasm. It catalyses the reaction (R)-pantothenate + ATP = (R)-4'-phosphopantothenate + ADP + H(+). It functions in the pathway cofactor biosynthesis; coenzyme A biosynthesis; CoA from (R)-pantothenate: step 1/5. Functionally, catalyzes the phosphorylation of pantothenate (Pan), the first step in CoA biosynthesis. The sequence is that of Type III pantothenate kinase from Salinispora arenicola (strain CNS-205).